Here is a 548-residue protein sequence, read N- to C-terminus: Membrane protein insertase YidC (548 aa).

A helical membrane pass occupies residues Asn6 to Asp26. The tract at residues Asn28–Ser55 is disordered. The span at Gln30–Gln50 shows a compositional bias: low complexity. 4 consecutive transmembrane segments (helical) span residues Phe350 to Tyr370, Leu420 to Leu440, Leu458 to Ile478, and Pro499 to Val519.

Belongs to the OXA1/ALB3/YidC family. Type 1 subfamily. Interacts with the Sec translocase complex via SecD. Specifically interacts with transmembrane segments of nascent integral membrane proteins during membrane integration.

Its subcellular location is the cell inner membrane. Required for the insertion and/or proper folding and/or complex formation of integral membrane proteins into the membrane. Involved in integration of membrane proteins that insert both dependently and independently of the Sec translocase complex, as well as at least some lipoproteins. Aids folding of multispanning membrane proteins. The polypeptide is Membrane protein insertase YidC (Shigella flexneri).